We begin with the raw amino-acid sequence, 193 residues long: Orotate phosphoribosyltransferase (193 aa).

5-phospho-alpha-D-ribose 1-diphosphate-binding positions include arginine 85, lysine 89, histidine 91, and 111 to 119 (DDVLTTGKS). Residues threonine 115 and arginine 143 each contribute to the orotate site.

It belongs to the purine/pyrimidine phosphoribosyltransferase family. PyrE subfamily. Homodimer. Requires Mg(2+) as cofactor.

The catalysed reaction is orotidine 5'-phosphate + diphosphate = orotate + 5-phospho-alpha-D-ribose 1-diphosphate. It participates in pyrimidine metabolism; UMP biosynthesis via de novo pathway; UMP from orotate: step 1/2. Its function is as follows. Catalyzes the transfer of a ribosyl phosphate group from 5-phosphoribose 1-diphosphate to orotate, leading to the formation of orotidine monophosphate (OMP). This Pyrobaculum islandicum (strain DSM 4184 / JCM 9189 / GEO3) protein is Orotate phosphoribosyltransferase.